An 88-amino-acid polypeptide reads, in one-letter code: UPF0335 protein NGR_c28390 (88 aa).

It belongs to the UPF0335 family.

This chain is UPF0335 protein NGR_c28390, found in Sinorhizobium fredii (strain NBRC 101917 / NGR234).